A 947-amino-acid polypeptide reads, in one-letter code: Bifunctional glutamine synthetase adenylyltransferase/adenylyl-removing enzyme (947 aa).

The tract at residues 1–440 (MTPLSSPLSQ…VFNELIGDDE (440 aa)) is adenylyl removase. Residues 450–947 (SEPWREVWQD…ASWRKWLVAV (498 aa)) are adenylyl transferase.

It belongs to the GlnE family. Mg(2+) is required as a cofactor.

The enzyme catalyses [glutamine synthetase]-O(4)-(5'-adenylyl)-L-tyrosine + phosphate = [glutamine synthetase]-L-tyrosine + ADP. It catalyses the reaction [glutamine synthetase]-L-tyrosine + ATP = [glutamine synthetase]-O(4)-(5'-adenylyl)-L-tyrosine + diphosphate. Its function is as follows. Involved in the regulation of glutamine synthetase GlnA, a key enzyme in the process to assimilate ammonia. When cellular nitrogen levels are high, the C-terminal adenylyl transferase (AT) inactivates GlnA by covalent transfer of an adenylyl group from ATP to specific tyrosine residue of GlnA, thus reducing its activity. Conversely, when nitrogen levels are low, the N-terminal adenylyl removase (AR) activates GlnA by removing the adenylyl group by phosphorolysis, increasing its activity. The regulatory region of GlnE binds the signal transduction protein PII (GlnB) which indicates the nitrogen status of the cell. The protein is Bifunctional glutamine synthetase adenylyltransferase/adenylyl-removing enzyme of Salmonella enteritidis PT4 (strain P125109).